Here is a 367-residue protein sequence, read N- to C-terminus: Molybdopterin synthase catalytic subunit (367 aa).

Residues 101-102 (HR), K117, and 124-126 (KKE) each bind substrate. Residues 326–345 (HFTKREPSSMEAAPPKKIRK) are disordered.

Belongs to the MoaE family. MOCS2B subfamily. Heterotetramer; composed of 2 small (Mocs2A) and 2 large (Mocs2B) subunits.

The protein resides in the cytoplasm. The enzyme catalyses 2 [molybdopterin-synthase sulfur-carrier protein]-C-terminal-Gly-aminoethanethioate + cyclic pyranopterin phosphate + H2O = molybdopterin + 2 [molybdopterin-synthase sulfur-carrier protein]-C-terminal Gly-Gly + 2 H(+). It functions in the pathway cofactor biosynthesis; molybdopterin biosynthesis. Catalytic subunit of the molybdopterin synthase complex, a complex that catalyzes the conversion of precursor Z into molybdopterin. Acts by mediating the incorporation of 2 sulfur atoms from thiocarboxylated Mocs2A into precursor Z to generate a dithiolene group. This is Molybdopterin synthase catalytic subunit from Drosophila sechellia (Fruit fly).